Consider the following 256-residue polypeptide: Type III pantothenate kinase (256 aa).

Position 6–13 (6–13) interacts with ATP; it reads DAGNSRIK. Residues Y90 and 97 to 100 each bind substrate; that span reads GSDR. D99 serves as the catalytic Proton acceptor. Position 123 (T123) interacts with ATP. Residue T187 participates in substrate binding.

This sequence belongs to the type III pantothenate kinase family. As to quaternary structure, homodimer. The cofactor is NH4(+). Requires K(+) as cofactor.

It is found in the cytoplasm. The catalysed reaction is (R)-pantothenate + ATP = (R)-4'-phosphopantothenate + ADP + H(+). It functions in the pathway cofactor biosynthesis; coenzyme A biosynthesis; CoA from (R)-pantothenate: step 1/5. Its function is as follows. Catalyzes the phosphorylation of pantothenate (Pan), the first step in CoA biosynthesis. The polypeptide is Type III pantothenate kinase (Burkholderia mallei (strain NCTC 10247)).